Consider the following 521-residue polypeptide: MTQDKILILDFGSQVTRLIARRVREAHVYCELHSFDMPLDEIKAFNPKGIILSGGPNSVYESDYQADTGIFDLGIPVLGICYGMQFMAHHLGGEVQPGNQREFGYAQVKTIDSGLTRGIQDDAPNTLDVWMSHGDKVSKLPDGFAVIGDTPSCPIAMMENTEKQFYGIQFHPEVTHTKQGRALLNRFVLDICGAQPGWTMPNYIEEAVAKIREQVGSDEVILGLSGGVDSSVAAALIHRAIGDQLTCVFVDHGLLRLNEGKMVMDMFARNLGVKVIHVDAEGQFMAKLAGVTDPEKKRKIIGAEFIEVFDAEEKKLTNAKWLAQGTIYPDVIESAGAKTKKAHAIKSHHNVGGLPENMKLKLLEPLRDLFKDEVRELGVALGLPREMVYRHPFPGPGLGVRILGEVKKEYADLLRQADDIFIQELRNTTDENGTSWYDLTSQAFAVFLPVKSVGVMGDGRTYDYVVALRAVITSDFMTAHWAELPYSLLGRVSNRIINEVKGINRVVYDVSGKPPATIEWE.

Positions 5–197 (KILILDFGSQ…VLDICGAQPG (193 aa)) constitute a Glutamine amidotransferase type-1 domain. Catalysis depends on C81, which acts as the Nucleophile. Residues H171 and E173 contribute to the active site. Residues 198 to 390 (WTMPNYIEEA…LGLPREMVYR (193 aa)) enclose the GMPS ATP-PPase domain. ATP is bound at residue 225-231 (SGGVDSS).

In terms of assembly, homodimer.

The enzyme catalyses XMP + L-glutamine + ATP + H2O = GMP + L-glutamate + AMP + diphosphate + 2 H(+). It participates in purine metabolism; GMP biosynthesis; GMP from XMP (L-Gln route): step 1/1. Functionally, catalyzes the synthesis of GMP from XMP. The protein is GMP synthase [glutamine-hydrolyzing] of Neisseria gonorrhoeae (strain NCCP11945).